The following is a 195-amino-acid chain: MEYTFNKLTKKDVKKLKVGDIVYLNGKIYTARDEAHLKIIEMLKSNEKLPFDLNESIIYHAGPIMKKVNDSWVCVSIGPTTSARMNDVEEEFIKLTNISAIVGKGGMKKELLKTFEDYGVVYLAAPGGCAALLANSVKRVDNVYFLDELGMPEAVWELEVNNFGPLIVAMDSHGNSIYEEVNKKVYEKLNELIGL.

The active site involves His36. Position 104 (Lys104) interacts with substrate.

This sequence belongs to the class-I fumarase family. In terms of assembly, heterotetramer of two alpha and two beta subunits.

It catalyses the reaction (2R,3R)-tartrate = oxaloacetate + H2O. This is Putative L(+)-tartrate dehydratase subunit beta from Methanocaldococcus jannaschii (strain ATCC 43067 / DSM 2661 / JAL-1 / JCM 10045 / NBRC 100440) (Methanococcus jannaschii).